Reading from the N-terminus, the 319-residue chain is Probable cell division protein WhiA (319 aa).

Positions 278–311 (SLKELGQMLNPPVGKSGVNHRLRRLESLAEAFSR) form a DNA-binding region, H-T-H motif.

Belongs to the WhiA family.

Functionally, involved in cell division and chromosome segregation. In Heliobacterium modesticaldum (strain ATCC 51547 / Ice1), this protein is Probable cell division protein WhiA.